A 119-amino-acid polypeptide reads, in one-letter code: MPRVKRGVTARARHKKIINLAKGYRGRRNNVYRIAKQAVMRAGQYAYRDRRNKKRVFRALWITRINAAVRQHDMTYSVFINGLKKASIELDRKVLADMAVFDKAAFAAIVKQVKAAVAA.

Belongs to the bacterial ribosomal protein bL20 family.

Its function is as follows. Binds directly to 23S ribosomal RNA and is necessary for the in vitro assembly process of the 50S ribosomal subunit. It is not involved in the protein synthesizing functions of that subunit. The sequence is that of Large ribosomal subunit protein bL20 from Burkholderia cenocepacia (strain HI2424).